The following is a 339-amino-acid chain: Serine/arginine-rich splicing factor 6 (339 aa).

Residues 2-72 (PRVYIGRLSY…ERVIVEHARG (71 aa)) form the RRM 1 domain. Phosphoserine occurs at positions 45, 81, and 84. Positions 75–103 (RDRDGYSYGSRSGGGGYSSRRTSGRDKYG) are disordered. The RRM 2 domain maps to 110-183 (YRLIVENLSS…RNIRLIEDKP (74 aa)). Lys165 is subject to N6-acetyllysine. The disordered stretch occupies residues 176 to 339 (IRLIEDKPRT…RSRSRSSSRD (164 aa)). A Glycyl lysine isopeptide (Lys-Gly) (interchain with G-Cter in SUMO2) cross-link involves residue Lys182. A compositionally biased stretch (basic residues) spans 185–250 (TSHRRSYSGS…RKSRSKSKSK (66 aa)). The segment covering 280–291 (SPKENGKGDIKS) has biased composition (basic and acidic residues). Phosphoserine occurs at positions 297 and 299. A Phosphoserine; by DYRK1A modification is found at Ser303. Residues Ser314 and Ser316 each carry the phosphoserine modification. Residues 321-339 (RASRSRSRSRSRSRSSSRD) show a composition bias toward basic residues.

The protein belongs to the splicing factor SR family. In terms of assembly, binds SREK1/SFRS12. Interacts with DYRK1A. Interacts with RBMY; the interaction inhibits SRSF6 pre-mRNA splicing. Extensively phosphorylated on serine residues in the RS domain. Phosphorylated by DYRK1A, probably in the RS domain. Phosphorylation by DYRK1A modulates alternative splice site selection and inhibits the expression of MAPT/Tau exon 10.

It is found in the nucleus. The protein localises to the nucleus speckle. Its function is as follows. Plays a role in constitutive splicing and modulates the selection of alternative splice sites. Plays a role in the alternative splicing of MAPT/Tau exon 10. Binds to alternative exons of TNC pre-mRNA and promotes the expression of alternatively spliced TNC. Plays a role in wound healing and in the regulation of keratinocyte differentiation and proliferation via its role in alternative splicing. This Mus musculus (Mouse) protein is Serine/arginine-rich splicing factor 6 (Srsf6).